The sequence spans 297 residues: Putative lipid kinase MamU (297 aa).

In terms of domain architecture, DAGKc spans 43–131 (EGKDMGRMVR…MDVGRVNDRY (89 aa)). 68–74 (GDGSLSR) is a binding site for ATP. Residue glutamate 274 is the Proton acceptor of the active site.

Belongs to the diacylglycerol/lipid kinase family.

The protein localises to the cytoplasm. Might phosphorylate lipids. The chain is Putative lipid kinase MamU from Magnetospirillum gryphiswaldense (strain DSM 6361 / JCM 21280 / NBRC 15271 / MSR-1).